A 252-amino-acid polypeptide reads, in one-letter code: Imidazole glycerol phosphate synthase subunit HisF (252 aa).

Residues aspartate 11 and aspartate 130 contribute to the active site.

The protein belongs to the HisA/HisF family. Heterodimer of HisH and HisF.

The protein localises to the cytoplasm. It catalyses the reaction 5-[(5-phospho-1-deoxy-D-ribulos-1-ylimino)methylamino]-1-(5-phospho-beta-D-ribosyl)imidazole-4-carboxamide + L-glutamine = D-erythro-1-(imidazol-4-yl)glycerol 3-phosphate + 5-amino-1-(5-phospho-beta-D-ribosyl)imidazole-4-carboxamide + L-glutamate + H(+). It participates in amino-acid biosynthesis; L-histidine biosynthesis; L-histidine from 5-phospho-alpha-D-ribose 1-diphosphate: step 5/9. In terms of biological role, IGPS catalyzes the conversion of PRFAR and glutamine to IGP, AICAR and glutamate. The HisF subunit catalyzes the cyclization activity that produces IGP and AICAR from PRFAR using the ammonia provided by the HisH subunit. In Geobacillus kaustophilus (strain HTA426), this protein is Imidazole glycerol phosphate synthase subunit HisF.